Consider the following 309-residue polypeptide: Homoserine O-succinyltransferase (309 aa).

Catalysis depends on Cys142, which acts as the Acyl-thioester intermediate. Substrate is bound by residues Lys163 and Ser192. The active-site Proton acceptor is His235. Residue Glu237 is part of the active site. A substrate-binding site is contributed by Arg249.

The protein belongs to the MetA family.

It is found in the cytoplasm. It carries out the reaction L-homoserine + succinyl-CoA = O-succinyl-L-homoserine + CoA. The protein operates within amino-acid biosynthesis; L-methionine biosynthesis via de novo pathway; O-succinyl-L-homoserine from L-homoserine: step 1/1. Its function is as follows. Transfers a succinyl group from succinyl-CoA to L-homoserine, forming succinyl-L-homoserine. This Klebsiella pneumoniae subsp. pneumoniae (strain ATCC 700721 / MGH 78578) protein is Homoserine O-succinyltransferase.